The sequence spans 591 residues: Aspartate--tRNA(Asp/Asn) ligase (591 aa).

Glu-175 is a binding site for L-aspartate. Residues 199–202 (QQYK) form an aspartate region. 2 residues coordinate L-aspartate: Arg-221 and His-450. 221–223 (RDE) is a binding site for ATP. An ATP-binding site is contributed by Glu-484. Arg-491 is a binding site for L-aspartate. 536–539 (GVDR) is an ATP binding site.

This sequence belongs to the class-II aminoacyl-tRNA synthetase family. Type 1 subfamily. As to quaternary structure, homodimer.

The protein localises to the cytoplasm. The catalysed reaction is tRNA(Asx) + L-aspartate + ATP = L-aspartyl-tRNA(Asx) + AMP + diphosphate. In terms of biological role, aspartyl-tRNA synthetase with relaxed tRNA specificity since it is able to aspartylate not only its cognate tRNA(Asp) but also tRNA(Asn). Reaction proceeds in two steps: L-aspartate is first activated by ATP to form Asp-AMP and then transferred to the acceptor end of tRNA(Asp/Asn). This chain is Aspartate--tRNA(Asp/Asn) ligase, found in Rhodopseudomonas palustris (strain ATCC BAA-98 / CGA009).